A 364-amino-acid chain; its full sequence is S-adenosylmethionine:tRNA ribosyltransferase-isomerase (364 aa).

This sequence belongs to the QueA family. In terms of assembly, monomer.

It is found in the cytoplasm. It catalyses the reaction 7-aminomethyl-7-carbaguanosine(34) in tRNA + S-adenosyl-L-methionine = epoxyqueuosine(34) in tRNA + adenine + L-methionine + 2 H(+). It functions in the pathway tRNA modification; tRNA-queuosine biosynthesis. Transfers and isomerizes the ribose moiety from AdoMet to the 7-aminomethyl group of 7-deazaguanine (preQ1-tRNA) to give epoxyqueuosine (oQ-tRNA). This is S-adenosylmethionine:tRNA ribosyltransferase-isomerase from Bradyrhizobium sp. (strain BTAi1 / ATCC BAA-1182).